The following is an 893-amino-acid chain: Nitrate reductase [NADPH] (893 aa).

The tract at residues 1 to 83 (MSVTTQQPAV…KPTPDAHVPR (83 aa)) is disordered. The span at 55 to 65 (PDFPLPPPANP) shows a compositional bias: pro residues. The segment covering 71 to 83 (DIDKPTPDAHVPR) has biased composition (basic and acidic residues). C170 contributes to the Mo-molybdopterin binding site. The Cytochrome b5 heme-binding domain occupies 536–611 (NRIVELDELK…MPAYHIGTLS (76 aa)). Residues H571 and H594 each coordinate heme. An FAD-binding FR-type domain is found at 641-752 (RTWSKALLSS…KGPIGKFEYL (112 aa)). FAD contacts are provided by residues 695–698 (RSYT), 712–716 (LIKIY), 726–728 (KMT), S776, and T779. An NADP(+)-binding site is contributed by 863–872 (LVLVCGPEGL).

It belongs to the nitrate reductase family. In terms of assembly, homodimer. FAD serves as cofactor. Heme is required as a cofactor. The cofactor is Mo-molybdopterin.

It catalyses the reaction nitrite + NADP(+) + H2O = nitrate + NADPH + H(+). Its function is as follows. Nitrate reductase is a key enzyme involved in the first step of nitrate assimilation in plants, fungi and bacteria. This is Nitrate reductase [NADPH] (NIAD) from Leptosphaeria maculans (Blackleg fungus).